Consider the following 499-residue polypeptide: T-cell activation inhibitor, mitochondrial (499 aa).

A coiled-coil region spans residues 206-233 (LRNSLPLRKELDRLKNELSELLQLSDIR).

Expressed in peripheral blood leukocytes, mainly in T-lymphocytes.

It is found in the mitochondrion. Its function is as follows. May regulate T-cell apoptosis. This is T-cell activation inhibitor, mitochondrial (TCAIM) from Mus musculus (Mouse).